Consider the following 126-residue polypeptide: Holo-[acyl-carrier-protein] synthase (126 aa).

The Mg(2+) site is built by aspartate 9 and glutamate 58.

It belongs to the P-Pant transferase superfamily. AcpS family. The cofactor is Mg(2+).

The protein localises to the cytoplasm. The catalysed reaction is apo-[ACP] + CoA = holo-[ACP] + adenosine 3',5'-bisphosphate + H(+). Its function is as follows. Transfers the 4'-phosphopantetheine moiety from coenzyme A to a Ser of acyl-carrier-protein. The polypeptide is Holo-[acyl-carrier-protein] synthase (Sodalis glossinidius (strain morsitans)).